The chain runs to 76 residues: FMRFamide-related neuropeptides (76 aa).

The first 27 residues, 1 to 27, serve as a signal peptide directing secretion; sequence MCVQTRMLVAVAVVLVVLAVLSDPVSA. Phenylalanine 39 carries the post-translational modification Phenylalanine amide.

Belongs to the FARP (FMRFamide related peptide) family. In terms of tissue distribution, olfactory lobe and accessory lobe, olfactory globular tract, olfactory lobe cells (at protein level). Widely distributed throughout nervous system.

It is found in the secreted. GYRKPPFNGSIF-amide may be involved in olfaction and contraction of hindgut. In Procambarus clarkii (Red swamp crayfish), this protein is FMRFamide-related neuropeptides.